A 333-amino-acid polypeptide reads, in one-letter code: GTPase Obg (333 aa).

The region spanning 1-159 is the Obg domain; that stretch reads MQFIDLAEIH…RHLRLELKLL (159 aa). An OBG-type G domain is found at 160–328; that stretch reads AEVGIIGLPN…LLEAVWQELG (169 aa). GTP is bound by residues 166–173, 191–195, 213–216, 280–283, and 309–311; these read GLPNAGKS, FTTLV, DIPG, NKID, and SAV. Residues serine 173 and threonine 193 each contribute to the Mg(2+) site.

Belongs to the TRAFAC class OBG-HflX-like GTPase superfamily. OBG GTPase family. Monomer. Mg(2+) serves as cofactor.

Its subcellular location is the cytoplasm. An essential GTPase which binds GTP, GDP and possibly (p)ppGpp with moderate affinity, with high nucleotide exchange rates and a fairly low GTP hydrolysis rate. Plays a role in control of the cell cycle, stress response, ribosome biogenesis and in those bacteria that undergo differentiation, in morphogenesis control. This is GTPase Obg from Thermosynechococcus vestitus (strain NIES-2133 / IAM M-273 / BP-1).